Here is a 139-residue protein sequence, read N- to C-terminus: MPLLTVDVVTAEERLYQGTAKFVVVPGTEGELGILPGHEPLLTRLRPGTVRVTLENDDEVILFVAGGFAHILPQEVILLADTAVRARDLDEAKAQQARKAAEELLQNSRSKIDYARAQAELAEAVAQLAAIERARRRRR.

This sequence belongs to the ATPase epsilon chain family. In terms of assembly, F-type ATPases have 2 components, CF(1) - the catalytic core - and CF(0) - the membrane proton channel. CF(1) has five subunits: alpha(3), beta(3), gamma(1), delta(1), epsilon(1). CF(0) has three main subunits: a, b and c.

It localises to the cell inner membrane. Produces ATP from ADP in the presence of a proton gradient across the membrane. This is ATP synthase epsilon chain 2 (atpC2) from Ralstonia nicotianae (strain ATCC BAA-1114 / GMI1000) (Ralstonia solanacearum).